A 636-amino-acid chain; its full sequence is Chaperone protein HtpG (636 aa).

The segment at 1–344 (MTLEADKQTH…SADLSLNVSR (344 aa)) is a; substrate-binding. Positions 345-561 (EILQSGPVVD…EGDLGLQMRQ (217 aa)) are b. Residues 562–636 (LLEASGQKVP…LNKLLLELSA (75 aa)) are c.

The protein belongs to the heat shock protein 90 family. Homodimer.

It localises to the cytoplasm. Its function is as follows. Molecular chaperone. Has ATPase activity. The sequence is that of Chaperone protein HtpG from Xylella fastidiosa (strain Temecula1 / ATCC 700964).